The sequence spans 124 residues: Conotoxin Im14.2 (124 aa).

An N-terminal signal peptide occupies residues 1–20 (MARFLSILLCFAMATGLAAG). A propeptide spanning residues 21-99 (IRYPDRVLGR…AENPVRDPKK (79 aa)) is cleaved from the precursor.

In terms of processing, contain 2 disulfide bonds. Expressed by the venom duct.

The protein resides in the secreted. Its function is as follows. Probable neurotoxin. This is Conotoxin Im14.2 from Conus imperialis (Imperial cone).